The sequence spans 881 residues: Alanine--tRNA ligase (881 aa).

Zn(2+)-binding residues include histidine 564, histidine 568, cysteine 673, and histidine 677. Residues 848 to 867 (GQGGGGRPDMAQAGGPDGDK) form a disordered region.

Belongs to the class-II aminoacyl-tRNA synthetase family. Zn(2+) serves as cofactor.

The protein resides in the cytoplasm. It catalyses the reaction tRNA(Ala) + L-alanine + ATP = L-alanyl-tRNA(Ala) + AMP + diphosphate. Functionally, catalyzes the attachment of alanine to tRNA(Ala) in a two-step reaction: alanine is first activated by ATP to form Ala-AMP and then transferred to the acceptor end of tRNA(Ala). Also edits incorrectly charged Ser-tRNA(Ala) and Gly-tRNA(Ala) via its editing domain. The polypeptide is Alanine--tRNA ligase (Hyphomonas neptunium (strain ATCC 15444)).